The sequence spans 444 residues: Glutamate-1-semialdehyde 2,1-aminomutase (444 aa).

Lysine 267 carries the post-translational modification N6-(pyridoxal phosphate)lysine.

This sequence belongs to the class-III pyridoxal-phosphate-dependent aminotransferase family. HemL subfamily. Homodimer. Requires pyridoxal 5'-phosphate as cofactor.

The protein resides in the cytoplasm. It catalyses the reaction (S)-4-amino-5-oxopentanoate = 5-aminolevulinate. Its pathway is porphyrin-containing compound metabolism; protoporphyrin-IX biosynthesis; 5-aminolevulinate from L-glutamyl-tRNA(Glu): step 2/2. The polypeptide is Glutamate-1-semialdehyde 2,1-aminomutase (Xylella fastidiosa (strain 9a5c)).